Here is a 248-residue protein sequence, read N- to C-terminus: Phycocyanobilin:ferredoxin oxidoreductase (248 aa).

This sequence belongs to the HY2 family.

It carries out the reaction (2R,3Z)-phycocyanobilin + 4 oxidized [2Fe-2S]-[ferredoxin] = biliverdin IXalpha + 4 reduced [2Fe-2S]-[ferredoxin] + 4 H(+). Its function is as follows. Catalyzes the four-electron reduction of biliverdin IX-alpha (2-electron reduction at both the A and D rings); the reaction proceeds via an isolatable 2-electron intermediate, 181,182-dihydrobiliverdin. This chain is Phycocyanobilin:ferredoxin oxidoreductase, found in Synechococcus sp. (strain ATCC 27144 / PCC 6301 / SAUG 1402/1) (Anacystis nidulans).